The following is a 358-amino-acid chain: MNLKSLSLQELEAALAPLSPSPAAVRKVFAAVFAHGAQSVEDVASARQVPRRVGDHLRAHAEMPKLAIVERRRADDGFVKYLFDSPLGGRIEAVRIPIFDEKYVICVSSQVGCALACDFCMTGKLGFKRNLQTWEILDQVLQVREEADRPVRGVVFMGMGEPLLNYKETLRAADILRHPAGFSIAGEAITFSTAGHVPAIRRYVREGHPYRLAFSVTSAIAEKRAKVLPIEKTHPLPELIAAIREYSEVRRERAMIAYVAISGFNMGREDAEALKVAFEGIRIKVDLIDVTDPTGKYLPPTPEELSAFRDHLQILKSPVARRYSGGKEIGAACGTLAATQYGGTVMPRPAEAPPSTTP.

Glutamate 92 serves as the catalytic Proton acceptor. The 229-residue stretch at 99-327 (FDEKYVICVS…PVARRYSGGK (229 aa)) folds into the Radical SAM core domain. Cysteine 106 and cysteine 333 are disulfide-bonded. Positions 113, 117, and 120 each coordinate [4Fe-4S] cluster. S-adenosyl-L-methionine contacts are provided by residues 160–161 (GE), serine 192, 215–217 (SVT), and aspartate 289. The active-site S-methylcysteine intermediate is cysteine 333.

Belongs to the radical SAM superfamily. RlmN family. [4Fe-4S] cluster is required as a cofactor.

Its subcellular location is the cytoplasm. This is Probable RNA methyltransferase MXAN_6459 from Myxococcus xanthus (strain DK1622).